The following is a 214-amino-acid chain: MAETSGPQSSHISSSSVGEKGSGCAVRDLLYWRDVKQSGMVFGGTMVLLLSLAAFSIISVISYLVLSLLTVTISYRVYKSVLQAVQKTDEGHPFKPLLEKDITLSSDSFQKALTASLAHVNHALKYIVRLFLVDDLVDSLKLALLMWLMTYVGAVFNGITLLILGVLLTFTAPIVYEKYKVQIDHYVSLVHSQVKSITEKIQAKLPGALKKKSE.

The disordered stretch occupies residues 1–21; that stretch reads MAETSGPQSSHISSSSVGEKG. The Reticulon domain maps to 26–214; the sequence is VRDLLYWRDV…LPGALKKKSE (189 aa). The next 2 membrane-spanning stretches (helical) occupy residues 46-66 and 155-175; these read MVLL…YLVL and VFNG…APIV.

As to quaternary structure, homodimer. As to expression, expressed in the animal hemisphere at the four-cell stage. During gastrulation, expression becomes restricted to the prospective neuroectoderm. At the early tail bud stage, expressed in the head structure. At the tadpole stage, expressed in head and neural tissues including the otic vesicle and optic nerve.

The protein localises to the endoplasmic reticulum membrane. It is found in the golgi apparatus membrane. Functionally, may be involved in membrane trafficking in the early secretory pathway. In Xenopus laevis (African clawed frog), this protein is Reticulon-3-A (rtn3-a).